Consider the following 822-residue polypeptide: Valine--tRNA ligase (822 aa).

Positions 41–51 match the 'HIGH' region motif; it reads PNVTGQLHLGH. The 'KMSKS' region signature appears at 511–515; that stretch reads KMSKS. Lys514 is an ATP binding site. A coiled-coil region spans residues 765 to 822; it reads EQKGRELKEIQFLKSEILRAEKILTNKGFLEKAPREKIDLERTKLEKLKEKLVFYEKK.

This sequence belongs to the class-I aminoacyl-tRNA synthetase family. ValS type 1 subfamily. In terms of assembly, monomer.

The protein localises to the cytoplasm. The enzyme catalyses tRNA(Val) + L-valine + ATP = L-valyl-tRNA(Val) + AMP + diphosphate. Its function is as follows. Catalyzes the attachment of valine to tRNA(Val). As ValRS can inadvertently accommodate and process structurally similar amino acids such as threonine, to avoid such errors, it has a 'posttransfer' editing activity that hydrolyzes mischarged Thr-tRNA(Val) in a tRNA-dependent manner. In Mesomycoplasma hyopneumoniae (strain J / ATCC 25934 / NCTC 10110) (Mycoplasma hyopneumoniae), this protein is Valine--tRNA ligase.